Consider the following 171-residue polypeptide: Putative rhomboid protein L523 (171 aa).

4 helical membrane-spanning segments follow: residues 3–23 (YVTYIVLLILVVIFFSPLNFF), 67–87 (FAFCIIFIWILSSMLLLAEHT), 94–114 (VYTVGFSGVIFGLIVVYLMSL), and 119–139 (GLSIAGLVLSIIPQFFVSGIS). Serine 100 acts as the Nucleophile in catalysis. Residue histidine 143 is part of the active site. Residues 144–164 (ICGMIAGFVYVVLFPLPKGSV) traverse the membrane as a helical segment.

The protein belongs to the peptidase S54 family.

The protein resides in the membrane. Its function is as follows. Probable serine protease. The sequence is that of Putative rhomboid protein L523 from Acanthamoeba polyphaga mimivirus (APMV).